Reading from the N-terminus, the 122-residue chain is Large ribosomal subunit protein uL14 (122 aa).

This sequence belongs to the universal ribosomal protein uL14 family. In terms of assembly, part of the 50S ribosomal subunit. Forms a cluster with proteins L3 and L19. In the 70S ribosome, L14 and L19 interact and together make contacts with the 16S rRNA in bridges B5 and B8.

Functionally, binds to 23S rRNA. Forms part of two intersubunit bridges in the 70S ribosome. In Brachyspira hyodysenteriae (strain ATCC 49526 / WA1), this protein is Large ribosomal subunit protein uL14.